Reading from the N-terminus, the 295-residue chain is Defective in cullin neddylation protein 1 (295 aa).

Residues 8 to 45 (QKTKLRQFVQWTQVTEAVSLNFLAKANWNIEYAMTLYF) form the UBA-like domain. Positions 60–272 (VDRSNIERLF…LIDQFVDYCR (213 aa)) constitute a DCUN1 domain.

As to quaternary structure, interacts with the cullin cul-3. Interacts with ubiquitin via its UBA-like domain. Interacts with ned-8/nedd8.

Its subcellular location is the nucleus. In terms of biological role, required for neddylation of cullin components of SCF-type E3 ubiquitin ligase complexes. Neddylation of cullins play an essential role in the regulation of SCF-type complexes activity. Does not act by preventing deneddylation, but rather facilitates neddylation, possibly by acting with rbx-1 to recruit the Nedd8-charged E2 enzyme to the cullin component of SCF-type complexes. This chain is Defective in cullin neddylation protein 1 (dcn-1), found in Caenorhabditis elegans.